The sequence spans 356 residues: Guanine nucleotide-binding protein alpha-2 subunit (356 aa).

Gly2 carries the N-myristoyl glycine lipid modification. The S-palmitoyl cysteine moiety is linked to residue Cys4. The region spanning 35-356 (REVKLLLLGA…LTNNLRDIVL (322 aa)) is the G-alpha domain. A G1 motif region spans residues 38-51 (KLLLLGAGESGKST). The GTP site is built by Glu46, Ser47, Gly48, Lys49, Ser50, Thr51, Asp153, Leu178, Thr184, Gly206, Asn272, Lys273, Asp275, and Ala329. Position 50 (Ser50) interacts with Mg(2+). Positions 176 to 184 (DILRCRNKT) are G2 motif. Thr184 contributes to the Mg(2+) binding site. A G3 motif region spans residues 199-208 (YRIFDVGGQR). Residues 268 to 275 (ILFLNKVD) are G4 motif. The tract at residues 327–332 (TNATDV) is G5 motif.

It belongs to the G-alpha family. In terms of assembly, g proteins are composed of 3 units; alpha, beta and gamma. The alpha chain contains the guanine nucleotide binding site. Requires Mg(2+) as cofactor.

Guanine nucleotide-binding proteins (G proteins) are involved as modulators or transducers in various transmembrane signaling systems. The polypeptide is Guanine nucleotide-binding protein alpha-2 subunit (GPA2) (Mycosarcoma maydis (Corn smut fungus)).